The chain runs to 369 residues: Putative F-box protein At1g70960 (369 aa).

The F-box domain occupies 3 to 54 (NTSFETLPRHMQMEILSRVPLKFLMKFMCVSKKWASIIRGEEFREDYLFQSM).

This is Putative F-box protein At1g70960 from Arabidopsis thaliana (Mouse-ear cress).